A 79-amino-acid chain; its full sequence is Peptide Im-5 (79 aa).

A signal peptide spans 1 to 23; sequence MKYRKQLLVLFFAYFLVVNESEA. Positions 49–79 are excised as a propeptide; it reads RALMKRDLQDRMDPYQRNLKLDRYLKQLALD.

Belongs to the non-disulfide-bridged peptide (NDBP) superfamily. Medium-length antimicrobial peptide (group 3) family. Expressed by the venom gland.

It is found in the secreted. Its subcellular location is the target cell membrane. In terms of biological role, antimicrobial peptide that may act by disrupting the integrity of the bacterial cell membrane. Has antibacterial activity against Gram-negative bacterium E.coli NBRC 3972 (MIC=10 uM) and against Gram-positive bacteria S.aureus NBRC 13276 (MIC=2.5-5 uM) and B.subtilis NBRC 3009 (MIC=0.5-1 uM). Also shows potent activity against antibiotic-sensitive and -resistant Acinetobacter baumannii (MIC=1.8-3.6 uM). Shows cytolytic activity against human and sheep erythrocytes. Toxic to cricket A.domestica. This is Peptide Im-5 from Isometrus maculatus (Lesser brown scorpion).